The following is a 67-amino-acid chain: MSLFPVFVVFGLSFPPIFFELILSLAIFWLVRKLLAPTGIYDFVWHPALFNTALYCCLFYLISRMFV.

The next 2 helical transmembrane spans lie at 3 to 23 (LFPV…ELIL) and 43 to 63 (FVWH…YLIS).

It belongs to the AaeX family.

Its subcellular location is the cell membrane. This is Protein AaeX from Enterobacter sp. (strain 638).